Consider the following 284-residue polypeptide: Bifunctional protein FolD (284 aa).

Residues 166–168 (GAS), Ser-191, and Ile-232 each bind NADP(+).

The protein belongs to the tetrahydrofolate dehydrogenase/cyclohydrolase family. In terms of assembly, homodimer.

The enzyme catalyses (6R)-5,10-methylene-5,6,7,8-tetrahydrofolate + NADP(+) = (6R)-5,10-methenyltetrahydrofolate + NADPH. It catalyses the reaction (6R)-5,10-methenyltetrahydrofolate + H2O = (6R)-10-formyltetrahydrofolate + H(+). The protein operates within one-carbon metabolism; tetrahydrofolate interconversion. Catalyzes the oxidation of 5,10-methylenetetrahydrofolate to 5,10-methenyltetrahydrofolate and then the hydrolysis of 5,10-methenyltetrahydrofolate to 10-formyltetrahydrofolate. The sequence is that of Bifunctional protein FolD from Neisseria meningitidis serogroup C (strain 053442).